The sequence spans 634 residues: Phototropic-responsive NPH3 family protein NPY2 (634 aa).

A BTB domain is found at 29 to 97 (SDISVDVEGS…CYGMTVTLSA (69 aa)). One can recognise an NPH3 domain in the interval 207 to 488 (DWWVEDLCEL…VQVLFFEQVR (282 aa)). Position 429 is a phosphotyrosine (tyrosine 429). 2 disordered regions span residues 492 to 517 (SSGS…YGSS) and 584 to 634 (QLQS…VSVS). Residues 588-602 (KGGGEKNNGGGGGGS) show a composition bias toward gly residues. The segment covering 619–634 (KTATPSRNLTRRVSVS) has biased composition (polar residues).

The protein belongs to the NPH3 family. Specifically expressed in the hypophysis and the root meristems in the embryos. Highly expressed in primary root tips and radicles.

It localises to the cell membrane. Its subcellular location is the cytoplasm. The protein resides in the cytosol. It functions in the pathway protein modification; protein ubiquitination. Functionally, may act as a substrate-specific adapter of an E3 ubiquitin-protein ligase complex (CUL3-RBX1-BTB) which mediates the ubiquitination and subsequent proteasomal degradation of target proteins. Plays an essential role in auxin-mediated organogenesis and in root gravitropic responses through the control of PIN proteins (e.g. PIN1 and PIN2) polarity in the root tip endodermal cell layer and in shoot epidermis. Recruited to the plasma membrane by PINs (e.g. PIN1 and PIN2) and, in concert with AGC kinases-mediated (e.g. D6PK and PID) PINs phosphorylation, maintains their polarity through limiting lateral diffusion-based escape. The protein is Phototropic-responsive NPH3 family protein NPY2 of Arabidopsis thaliana (Mouse-ear cress).